The primary structure comprises 148 residues: Iron/alpha-ketoglutarate-dependent dioxygenase ausU (148 aa).

Residues histidine 45 and aspartate 47 each coordinate Fe cation.

Belongs to the PhyH family. As to quaternary structure, homodimer. Fe cation serves as cofactor.

Its pathway is secondary metabolite biosynthesis; terpenoid biosynthesis. In terms of biological role, iron/alpha-ketoglutarate-dependent dioxygenase; part of the gene cluster B that mediates the biosynthesis of austinol and dehydroaustinol, two fungal meroterpenoids. The first step of the pathway is the synthesis of 3,5-dimethylorsellinic acid by the polyketide synthase ausA. 3,5-dimethylorsellinic acid is then prenylated by the polyprenyl transferase ausN. Further epoxidation by the FAD-dependent monooxygenase ausM and cyclization by the probable terpene cyclase ausL lead to the formation of protoaustinoid A. Protoaustinoid A is then oxidized to spiro-lactone preaustinoid A3 by the combined action of the FAD-binding monooxygenases ausB and ausC, and the dioxygenase ausE. Acid-catalyzed keto-rearrangement and ring contraction of the tetraketide portion of preaustinoid A3 by ausJ lead to the formation of preaustinoid A4. The aldo-keto reductase ausK, with the help of ausH, is involved in the next step by transforming preaustinoid A4 into isoaustinone which is in turn hydroxylated by the P450 monooxygenase ausI to form austinolide. Finally, the cytochrome P450 monooxygenase ausG modifies austinolide to austinol. Austinol can be further modified to dehydroaustinol which forms a diffusible complex with diorcinol that initiates conidiation. Due to genetic rearrangements of the clusters and the subsequent loss of some enzymes, the end products of the Emericella nidulans austinoid biosynthesis clusters are austinol and dehydroaustinol, even if additional enzymes, such as the O-acetyltransferase ausQ and the cytochrome P450 monooxygenase ausR are still functional. The chain is Iron/alpha-ketoglutarate-dependent dioxygenase ausU from Emericella nidulans (strain FGSC A4 / ATCC 38163 / CBS 112.46 / NRRL 194 / M139) (Aspergillus nidulans).